We begin with the raw amino-acid sequence, 461 residues long: Fumarate hydratase class II (461 aa).

Substrate-binding positions include 98–100, 129–132, 139–141, and T187; these read SGT, HPND, and SSN. The interval 120 to 140 is disordered; it reads SKKGGKSPVHPNDHVNKGQSS. The active-site Proton donor/acceptor is the H188. Residue S318 is part of the active site. Residues S319 and 324-326 each bind substrate; that span reads KVN.

It belongs to the class-II fumarase/aspartase family. Fumarase subfamily. As to quaternary structure, homotetramer.

It is found in the cytoplasm. It carries out the reaction (S)-malate = fumarate + H2O. Its pathway is carbohydrate metabolism; tricarboxylic acid cycle; (S)-malate from fumarate: step 1/1. Its function is as follows. Involved in the TCA cycle. Catalyzes the stereospecific interconversion of fumarate to L-malate. The polypeptide is Fumarate hydratase class II (Rickettsia felis (strain ATCC VR-1525 / URRWXCal2) (Rickettsia azadi)).